The following is a 312-amino-acid chain: Beta-ketoacyl-[acyl-carrier-protein] synthase III 1 (312 aa).

Catalysis depends on residues C113 and H237. Residues 238–242 (QANIR) are ACP-binding. N267 is a catalytic residue.

The protein belongs to the thiolase-like superfamily. FabH family. Homodimer.

The protein resides in the cytoplasm. The enzyme catalyses malonyl-[ACP] + acetyl-CoA + H(+) = 3-oxobutanoyl-[ACP] + CO2 + CoA. It participates in lipid metabolism; fatty acid biosynthesis. Functionally, catalyzes the condensation reaction of fatty acid synthesis by the addition to an acyl acceptor of two carbons from malonyl-ACP. Catalyzes the first condensation reaction which initiates fatty acid synthesis and may therefore play a role in governing the total rate of fatty acid production. Possesses both acetoacetyl-ACP synthase and acetyl transacylase activities. Its substrate specificity determines the biosynthesis of branched-chain and/or straight-chain of fatty acids. The polypeptide is Beta-ketoacyl-[acyl-carrier-protein] synthase III 1 (Halalkalibacterium halodurans (strain ATCC BAA-125 / DSM 18197 / FERM 7344 / JCM 9153 / C-125) (Bacillus halodurans)).